The primary structure comprises 106 residues: UPF0060 membrane protein Bxeno_B1021 (106 aa).

A run of 4 helical transmembrane segments spans residues 2 to 22, 30 to 50, 58 to 78, and 82 to 102; these read KTFL…YLPW, SIWL…LLTL, VYAA…WCVD, and PTLW…IIAF.

It belongs to the UPF0060 family.

The protein resides in the cell inner membrane. In Paraburkholderia xenovorans (strain LB400), this protein is UPF0060 membrane protein Bxeno_B1021.